A 260-amino-acid polypeptide reads, in one-letter code: 5'-nucleotidase SurE (260 aa).

A divalent metal cation is bound by residues Asp10, Asp11, Ser41, and Asn95.

The protein belongs to the SurE nucleotidase family. The cofactor is a divalent metal cation.

It is found in the cytoplasm. It carries out the reaction a ribonucleoside 5'-phosphate + H2O = a ribonucleoside + phosphate. Nucleotidase that shows phosphatase activity on nucleoside 5'-monophosphates. The sequence is that of 5'-nucleotidase SurE from Methanoregula boonei (strain DSM 21154 / JCM 14090 / 6A8).